Reading from the N-terminus, the 84-residue chain is U4-theraphotoxin-Hhn1n (84 aa).

Positions 1-22 (MKVTLIAILTCAAVLVLHTTAA) are cleaved as a signal peptide. Positions 23-47 (EELEESQLMEVGMPDTELAAVDEER) are excised as a propeptide. Disulfide bonds link Cys51-Cys65, Cys55-Cys76, and Cys70-Cys81.

Belongs to the neurotoxin 12 (Hwtx-2) family. 02 (Hwtx-2) subfamily. Expressed by the venom gland.

It localises to the secreted. Postsynaptic neurotoxin. This is U4-theraphotoxin-Hhn1n from Cyriopagopus hainanus (Chinese bird spider).